The chain runs to 1375 residues: Probable GMP synthase [glutamine-hydrolyzing] (1375 aa).

The region spanning 7-119 (QILVLDFGSQ…VLEIMESSQD (113 aa)) is the Glutamine amidotransferase type-1; first part domain. The active-site Nucleophile is cysteine 84. Residues 120–500 (SKDSSCFAFQ…NNATQGFKSC (381 aa)) form an insert-1 region. N-acetyltransferase domains lie at 141-300 (LSFD…KALE) and 318-484 (VFLR…LEKK). A Glutamine amidotransferase type-1; second part domain is found at 501–580 (SLFKGIKQDS…AVGICGANTC (80 aa)). Active-site residues include histidine 554 and glutamate 556. The tract at residues 597–1071 (IVYGGKAHCE…SGVANSLKIT (475 aa)) is insert-2. The N-acetyltransferase 3 domain occupies 612–765 (MQIQEAFKHI…ELIPLSIARE (154 aa)). Positions 1011 to 1036 (RIVDSQHTESSDIKGQSHLESSADSG) are disordered. Positions 1014 to 1027 (DSQHTESSDIKGQS) are enriched in basic and acidic residues. The region spanning 1055 to 1250 (YLEGNDRSGV…LGMPESMLMR (196 aa)) is the GMPS ATP-PPase domain. 1083 to 1089 (SGGVDSS) contacts ATP.

In terms of assembly, homodimer.

It carries out the reaction XMP + L-glutamine + ATP + H2O = GMP + L-glutamate + AMP + diphosphate + 2 H(+). The protein operates within purine metabolism; GMP biosynthesis; GMP from XMP (L-Gln route): step 1/1. Catalyzes the synthesis of GMP from XMP. The protein is Probable GMP synthase [glutamine-hydrolyzing] (guaA) of Helicobacter hepaticus (strain ATCC 51449 / 3B1).